The primary structure comprises 1118 residues: Cytospin-A (1118 aa).

4 disordered regions span residues 1–50 (MKKA…AALS), 75–175 (KKSN…DNQI), 294–324 (SLSP…GSVE), and 359–391 (SSDD…NASE). Composition is skewed to low complexity over residues 34 to 48 (APTG…AAAA), 80 to 90 (SSAAPSAPAPA), and 99 to 113 (KSST…RSTS). The segment covering 120–131 (SSTRERLRERTR) has biased composition (basic and acidic residues). A compositionally biased stretch (polar residues) spans 133-145 (NQSKKLPSVSQGA). Over residues 158–171 (TATEGDIRMSKSKS) the composition is skewed to basic and acidic residues. Residues 168-281 (KSKSDNQISD…LNALGFSLEQ (114 aa)) are a coiled coil. Positions 294–304 (SLSPEITPGNQ) are enriched in polar residues. A compositionally biased stretch (low complexity) spans 359–373 (SSDDALDAPSSSESE). A phosphoserine mark is found at S385, S386, and S390. Coiled coils occupy residues 395 to 450 (ACLT…MESL) and 488 to 808 (RYME…RGRV). 3 positions are modified to phosphoserine: S869, S882, and S888. The segment at 916 to 999 (EHLLRTSSTS…STRSRIREER (84 aa)) is disordered. Residues 947 to 957 (RSSEEMKRDIS) show a composition bias toward basic and acidic residues. A compositionally biased stretch (low complexity) spans 972–992 (TTSPQLSLSSSPTASVTPSTR). The Calponin-homology (CH) domain occupies 1012-1117 (GSKRNALLKW…YVTAIYKYFE (106 aa)).

It belongs to the cytospin-A family. In terms of assembly, may interact with both microtubules and actin cytoskeleton.

The protein localises to the cytoplasm. It is found in the cytoskeleton. It localises to the spindle. Its subcellular location is the cell junction. The protein resides in the gap junction. Functionally, involved in cytokinesis and spindle organization. May play a role in actin cytoskeleton organization and microtubule stabilization and hence required for proper cell adhesion and migration. This chain is Cytospin-A (Specc1l), found in Rattus norvegicus (Rat).